A 259-amino-acid polypeptide reads, in one-letter code: Probable metal transport system ATP-binding protein CT_068 (259 aa).

The region spanning 9-241 (WSVEDLCVNY…AIFQAYGCEL (233 aa)) is the ABC transporter domain. 41 to 48 (GPNGAGKS) provides a ligand contact to ATP.

The protein belongs to the ABC transporter superfamily.

It is found in the cell inner membrane. Functionally, part of an ATP-driven transport system CT_067/CT_068/CT_069/CT_070 for a metal. Probably responsible for energy coupling to the transport system. This chain is Probable metal transport system ATP-binding protein CT_068, found in Chlamydia trachomatis serovar D (strain ATCC VR-885 / DSM 19411 / UW-3/Cx).